The following is a 388-amino-acid chain: Ras-related protein Rab-26 (388 aa).

Positions 1–115 (MASTAVGLGG…HHHSQLSLTG (115 aa)) are disordered. Over residues 7–21 (GLGGGEGDPGAGGPP) the composition is skewed to gly residues. The span at 47–56 (RIEELRRRPF) shows a compositional bias: basic and acidic residues. The span at 67–86 (PASVSASITTTTTQQQQQHH) shows a compositional bias: low complexity. Positions 87–109 (NPSHHHQSSHHQPSHHHHHHHHS) are enriched in basic residues. 197–204 (GDSGVGKT) is a GTP binding site. Positions 219-228 (SFSATVGIAL) match the Effector region motif. Residues 246 to 250 (DTAGQ) and 304 to 307 (NKAD) each bind GTP. C382 carries S-palmitoyl cysteine lipidation. C385 is modified (cysteine methyl ester). C385 carries S-geranylgeranyl cysteine lipidation. The propeptide at 386–388 (RNM) is removed in mature form.

It belongs to the small GTPase superfamily. Rab family.

Its subcellular location is the cell membrane. Functionally, participates in exocrine secretion. The sequence is that of Ras-related protein Rab-26 from Drosophila melanogaster (Fruit fly).